Consider the following 446-residue polypeptide: Glutamine synthetase (446 aa).

Residues 18–103 form the GS beta-grasp domain; sequence ENVRYLRLQF…LICDVYKTDG (86 aa). The GS catalytic domain maps to 110 to 446; that stretch reads PRANLKRVLK…WERDQYMKQY (337 aa). Mg(2+)-binding residues include Glu134 and Glu136. Position 186 (Glu186) interacts with ATP. Residues Glu191 and Glu198 each contribute to the Mg(2+) site. Residues 242-243 and Gly243 contribute to the L-glutamate site; that span reads NG. His247 is a Mg(2+) binding site. Ser251 serves as a coordination point for ATP. 3 residues coordinate L-glutamate: Arg300, Glu306, and Arg318. The ATP site is built by Arg318 and Arg323. Position 335 (Glu335) interacts with Mg(2+). Arg337 contributes to the L-glutamate binding site.

Belongs to the glutamine synthetase family. In terms of assembly, oligomer of 12 subunits arranged in the form of two hexagons. In its feedback-inhibited form, interacts with TnrA in order to block its DNA-binding activity. Mg(2+) is required as a cofactor.

It localises to the cytoplasm. The catalysed reaction is L-glutamate + NH4(+) + ATP = L-glutamine + ADP + phosphate + H(+). With respect to regulation, inhibited by glutamine. Functionally, glutamine synthetase (GS) is an unusual multitasking protein that functions as an enzyme, a transcription coregulator, and a chaperone in ammonium assimilation and in the regulation of genes involved in nitrogen metabolism. It catalyzes the ATP-dependent biosynthesis of glutamine from glutamate and ammonia. Feedback-inhibited GlnA also interacts with and regulates the activity of the transcriptional regulator TnrA. During nitrogen limitation, TnrA is in its DNA-binding active state and turns on the transcription of genes required for nitrogen assimilation. Under conditions of nitrogen excess, feedback-inhibited GlnA forms a stable complex with TnrA, which inhibits its DNA-binding activity. In contrast, feedback-inhibited GlnA acts as a chaperone to stabilize the DNA-binding activity of GlnR, which represses the transcription of nitrogen assimilation genes. This is Glutamine synthetase from Staphylococcus aureus (strain N315).